The primary structure comprises 558 residues: Glucose-6-phosphate isomerase (558 aa).

Position 2 is an N-acetylalanine (Ala-2). Lys-12 bears the N6-acetyllysine mark. An N6-(2-hydroxyisobutyryl)lysine modification is found at Lys-34. At Ser-107 the chain carries Phosphoserine. At Thr-109 the chain carries Phosphothreonine. An N6-acetyllysine modification is found at Lys-142. 159 to 160 (GS) contributes to the D-glucose 6-phosphate binding site. At Ser-185 the chain carries Phosphoserine; by CK2. 210–215 (SKTFTT) serves as a coordination point for D-glucose 6-phosphate. Position 250 is a phosphothreonine (Thr-250). D-glucose 6-phosphate-binding residues include Gln-354, Glu-358, and His-389. Glu-358 acts as the Proton donor in catalysis. His-389 is an active-site residue. Position 454 is an N6-acetyllysine; alternate (Lys-454). Residue Lys-454 is modified to N6-malonyllysine; alternate. Lys-454 carries the N6-succinyllysine; alternate modification. Ser-455 carries the post-translational modification Phosphoserine. Lys-519 contacts D-glucose 6-phosphate. Lys-519 is an active-site residue.

This sequence belongs to the GPI family. Homodimer; in the catalytically active form. Monomer in the secreted form. In terms of processing, phosphorylation at Ser-185 by CK2 has been shown to decrease enzymatic activity and may contribute to secretion by a non-classical secretory pathway. Post-translationally, ISGylated.

It localises to the cytoplasm. The protein localises to the secreted. The enzyme catalyses alpha-D-glucose 6-phosphate = beta-D-fructose 6-phosphate. It participates in carbohydrate degradation; glycolysis; D-glyceraldehyde 3-phosphate and glycerone phosphate from D-glucose: step 2/4. Its function is as follows. In the cytoplasm, catalyzes the conversion of glucose-6-phosphate to fructose-6-phosphate, the second step in glycolysis, and the reverse reaction during gluconeogenesis. Besides it's role as a glycolytic enzyme, also acts as a secreted cytokine: acts as an angiogenic factor (AMF) that stimulates endothelial cell motility. Acts as a neurotrophic factor, neuroleukin, for spinal and sensory neurons. It is secreted by lectin-stimulated T-cells and induces immunoglobulin secretion. The protein is Glucose-6-phosphate isomerase of Pongo abelii (Sumatran orangutan).